Reading from the N-terminus, the 199-residue chain is Peptidyl-tRNA hydrolase (199 aa).

Residue Tyr25 coordinates tRNA. His30 acts as the Proton acceptor in catalysis. Residues Tyr76, Asn78, and Asn124 each coordinate tRNA.

This sequence belongs to the PTH family. Monomer.

The protein resides in the cytoplasm. The catalysed reaction is an N-acyl-L-alpha-aminoacyl-tRNA + H2O = an N-acyl-L-amino acid + a tRNA + H(+). Hydrolyzes ribosome-free peptidyl-tRNAs (with 1 or more amino acids incorporated), which drop off the ribosome during protein synthesis, or as a result of ribosome stalling. Functionally, catalyzes the release of premature peptidyl moieties from peptidyl-tRNA molecules trapped in stalled 50S ribosomal subunits, and thus maintains levels of free tRNAs and 50S ribosomes. This Mycobacterium leprae (strain Br4923) protein is Peptidyl-tRNA hydrolase.